An 88-amino-acid chain; its full sequence is Small ribosomal subunit protein uS17 (88 aa).

The protein belongs to the universal ribosomal protein uS17 family. Part of the 30S ribosomal subunit.

Its function is as follows. One of the primary rRNA binding proteins, it binds specifically to the 5'-end of 16S ribosomal RNA. In Ruthia magnifica subsp. Calyptogena magnifica, this protein is Small ribosomal subunit protein uS17.